Consider the following 155-residue polypeptide: Small ribosomal subunit protein uS9 (155 aa).

The protein belongs to the universal ribosomal protein uS9 family.

The protein is Small ribosomal subunit protein uS9 of Sinorhizobium fredii (strain NBRC 101917 / NGR234).